A 176-amino-acid polypeptide reads, in one-letter code: Lipoprotein signal peptidase (176 aa).

4 helical membrane-spanning segments follow: residues 10 to 30 (LFQF…AIVL), 48 to 68 (VPVL…AFSF), 78 to 98 (YFFT…LLRM), and 102 to 122 (MVVL…NLID). Catalysis depends on residues aspartate 131 and aspartate 149. A helical membrane pass occupies residues 141-161 (HFPAFNIADSAITLGTILLLI).

The protein belongs to the peptidase A8 family.

Its subcellular location is the cell inner membrane. The enzyme catalyses Release of signal peptides from bacterial membrane prolipoproteins. Hydrolyzes -Xaa-Yaa-Zaa-|-(S,diacylglyceryl)Cys-, in which Xaa is hydrophobic (preferably Leu), and Yaa (Ala or Ser) and Zaa (Gly or Ala) have small, neutral side chains.. It participates in protein modification; lipoprotein biosynthesis (signal peptide cleavage). In terms of biological role, this protein specifically catalyzes the removal of signal peptides from prolipoproteins. This is Lipoprotein signal peptidase from Acinetobacter baumannii (strain SDF).